A 31-amino-acid chain; its full sequence is Hyaluronidase (31 aa).

The protein belongs to the glycosyl hydrolase 56 family. In terms of processing, contains 2 disulfide bonds. Post-translationally, N-glycosylated on at least two Asn residues by identical heptasaccharide units composed of Man, GlcNAc, and Fuc residues in the molar ration of 3:2:2. In terms of tissue distribution, expressed by the venom gland.

It localises to the secreted. The enzyme catalyses Random hydrolysis of (1-&gt;4)-linkages between N-acetyl-beta-D-glucosamine and D-glucuronate residues in hyaluronate.. In terms of biological role, hydrolyzes high molecular weight hyaluronic acid to produce small oligosaccharides. The chain is Hyaluronidase from Vespula maculifrons (Eastern yellow jacket).